The following is a 197-amino-acid chain: MPITPATATPSSSNGTAEAILLELVDENGVTIGTAEKLSAHQPPGRLHRAFSVFLFDERGRLLIQQRALGKYHSPGVWSNTCCGHPYPGEAPFAAAARRTFEELGVSPSLLAEAGTVRYNHPDPASGLVEQEYNHLFVGLVQAELRPDPEEVAGTAFVSPAELTERHAQDTFSAWFMTVLDAARPAVRELTGTSAGW.

Mn(2+) contacts are provided by histidine 41 and histidine 48. One can recognise a Nudix hydrolase domain in the interval 46–183 (RLHRAFSVFL…AWFMTVLDAA (138 aa)). Cysteine 83 is a catalytic residue. Mg(2+) is bound at residue cysteine 83. Histidine 85 contacts Mn(2+). Glutamate 103 contacts Mg(2+). 2 residues coordinate Mn(2+): glutamate 130 and glutamate 132. Residue glutamate 132 is part of the active site.

It belongs to the IPP isomerase type 1 family. It depends on Mg(2+) as a cofactor. Mn(2+) serves as cofactor.

The protein localises to the cytoplasm. It catalyses the reaction isopentenyl diphosphate = dimethylallyl diphosphate. Its pathway is isoprenoid biosynthesis; dimethylallyl diphosphate biosynthesis; dimethylallyl diphosphate from isopentenyl diphosphate: step 1/1. Its function is as follows. Catalyzes the 1,3-allylic rearrangement of the homoallylic substrate isopentenyl (IPP) to its highly electrophilic allylic isomer, dimethylallyl diphosphate (DMAPP). This Streptomyces coelicolor (strain ATCC BAA-471 / A3(2) / M145) protein is Isopentenyl-diphosphate Delta-isomerase.